Reading from the N-terminus, the 69-residue chain is Neurotoxin Cex7 (69 aa).

A1 is a signal peptide. The 66-residue stretch at 2 to 67 folds into the LCN-type CS-alpha/beta domain; the sequence is REGYLVSKST…TYPIPGKSCG (66 aa). Cystine bridges form between C13–C66, C17–C42, C26–C47, and C30–C49. C66 bears the Cysteine amide mark. A propeptide spanning residues 67–69 is cleaved from the precursor; the sequence is GKK.

Belongs to the long (4 C-C) scorpion toxin superfamily. Sodium channel inhibitor family. Beta subfamily. In terms of tissue distribution, expressed by the venom gland.

Its subcellular location is the secreted. In terms of biological role, beta toxins bind voltage-independently at site-4 of sodium channels (Nav) and shift the voltage of activation toward more negative potentials thereby affecting sodium channel activation and promoting spontaneous and repetitive firing. This Centruroides exilicauda (Bark scorpion) protein is Neurotoxin Cex7.